The chain runs to 267 residues: Cyclin-C (267 aa).

The Cyclin N-terminal domain maps to 48–151; the sequence is IQVLGEQLKL…LLENLDCCLI (104 aa).

This sequence belongs to the cyclin family. Cyclin C subfamily. In terms of assembly, component of the Cdk8 module of the Mediator complex.

The protein resides in the nucleus. Its function is as follows. Component of the Mediator complex, a coactivator involved in regulated gene transcription of nearly all RNA polymerase II-dependent genes. Mediator functions as a bridge to convey information from gene-specific regulatory proteins to the basal RNA polymerase II transcription machinery. Mediator is recruited to promoters by direct interactions with regulatory proteins and serves as a scaffold for the assembly of a functional preinitiation complex with RNA polymerase II and the general transcription factors. Binds to and activates cyclin-dependent kinase Cdk8 that phosphorylates the CTD (C-terminal domain) of the large subunit of RNA polymerase II (RNAp II), which may inhibit the formation of a transcription initiation complex. This Drosophila pseudoobscura pseudoobscura (Fruit fly) protein is Cyclin-C (CycC).